Consider the following 246-residue polypeptide: 1-(5-phosphoribosyl)-5-[(5-phosphoribosylamino)methylideneamino] imidazole-4-carboxamide isomerase (246 aa).

The active-site Proton acceptor is the D8. Residue D131 is the Proton donor of the active site.

This sequence belongs to the HisA/HisF family.

Its subcellular location is the cytoplasm. The catalysed reaction is 1-(5-phospho-beta-D-ribosyl)-5-[(5-phospho-beta-D-ribosylamino)methylideneamino]imidazole-4-carboxamide = 5-[(5-phospho-1-deoxy-D-ribulos-1-ylimino)methylamino]-1-(5-phospho-beta-D-ribosyl)imidazole-4-carboxamide. Its pathway is amino-acid biosynthesis; L-histidine biosynthesis; L-histidine from 5-phospho-alpha-D-ribose 1-diphosphate: step 4/9. The polypeptide is 1-(5-phosphoribosyl)-5-[(5-phosphoribosylamino)methylideneamino] imidazole-4-carboxamide isomerase (Polaromonas sp. (strain JS666 / ATCC BAA-500)).